Reading from the N-terminus, the 253-residue chain is uncharacterized protein (253 aa).

S-adenosyl-L-methionine-binding positions include glycine 45, 66 to 67 (DA), 94 to 95 (AE), and arginine 110.

The protein belongs to the methyltransferase superfamily.

This is an uncharacterized protein from Bacillus subtilis (strain 168).